Here is a 471-residue protein sequence, read N- to C-terminus: Rho GTPase-activating protein 15 (471 aa).

Residues 1 to 20 (MQKSTNSDIPVETLNPTRQG) are disordered. Ser-43 bears the Phosphoserine mark. Positions 79 to 189 (MVEKEGYLQK…WFHAIKNAID (111 aa)) constitute a PH domain. Ser-196, Ser-199, and Ser-243 each carry phosphoserine. The Rho-GAP domain maps to 281–470 (SHLHTLCERE…LMLSAYDQIF (190 aa)).

It is found in the cytoplasm. Its subcellular location is the membrane. Its function is as follows. GTPase activator for the Rho-type GTPases by converting them to an inactive GDP-bound state. Has activity toward RAC1. Overexpression results in an increase in actin stress fibers and cell contraction. This chain is Rho GTPase-activating protein 15 (ARHGAP15), found in Bos taurus (Bovine).